Reading from the N-terminus, the 117-residue chain is MNLQIEMEHHRGVLIVRLSGELDHHTSDMVRMQMDEAIQRRQCEHIVLSLKNLQFMDSSGLGVILGRYKLINQKGGEMAVCDVNPPVHRLLDMSGLFKIMPIYDNEVNALTELEVVS.

Residues 3-113 (LQIEMEHHRG…DNEVNALTEL (111 aa)) enclose the STAS domain. Serine 58 bears the Phosphoserine mark.

Belongs to the anti-sigma-factor antagonist family. Phosphorylated by SpoIIAB on a serine residue.

Functionally, in the phosphorylated form it could act as an anti-anti-sigma factor that counteracts SpoIIAB and thus releases sigma f from inhibition. This Paenibacillus polymyxa (Bacillus polymyxa) protein is Anti-sigma F factor antagonist (spoIIAA).